The primary structure comprises 191 residues: Oleosin 20.3 kDa (191 aa).

An N-acetylalanine modification is found at Ala2. Residues 2–54 (ANVDRDRRVHVDRTDKRVHQPNYEDDVGFGGYGGYGAGSDYKSRGPSTNQILA) are polar. The next 2 helical transmembrane spans lie at 52 to 72 (ILALIAGVPIGGTLLTLAGLT) and 99 to 119 (LTIGLAVTGILASGLFGLTGL). The segment at 55-128 (LIAGVPIGGT…LSSVSWVLNY (74 aa)) is hydrophobic.

The protein belongs to the oleosin family.

The protein resides in the lipid droplet. It localises to the membrane. In terms of biological role, may have a structural role to stabilize the lipid body during desiccation of the seed by preventing coalescence of the oil. Probably interacts with both lipid and phospholipid moieties of lipid bodies. May also provide recognition signals for specific lipase anchorage in lipolysis during seedling growth. This is Oleosin 20.3 kDa (OL2) from Arabidopsis thaliana (Mouse-ear cress).